Consider the following 750-residue polypeptide: Serine/threonine-protein kinase GE16371 (750 aa).

2 Doublecortin domains span residues 159–245 and 315–398; these read LRIK…VEYN and RIVT…AEDF. Residues 479 to 737 form the Protein kinase domain; that stretch reads YTLGKIIGDG…SEDILDHYWT (259 aa). Residues 485–493 and lysine 508 contribute to the ATP site; that span reads IGDGNFAIV. The Proton acceptor role is filled by aspartate 600.

It belongs to the protein kinase superfamily. CAMK Ser/Thr protein kinase family. CaMK subfamily.

It catalyses the reaction L-seryl-[protein] + ATP = O-phospho-L-seryl-[protein] + ADP + H(+). The catalysed reaction is L-threonyl-[protein] + ATP = O-phospho-L-threonyl-[protein] + ADP + H(+). The sequence is that of Serine/threonine-protein kinase GE16371 from Drosophila yakuba (Fruit fly).